Reading from the N-terminus, the 361-residue chain is tRNA/tmRNA (uracil-C(5))-methyltransferase (361 aa).

The S-adenosyl-L-methionine site is built by Q185, Y213, N218, E234, and D294. The Nucleophile role is filled by C319. E353 serves as the catalytic Proton acceptor.

This sequence belongs to the class I-like SAM-binding methyltransferase superfamily. RNA M5U methyltransferase family. TrmA subfamily.

The enzyme catalyses uridine(54) in tRNA + S-adenosyl-L-methionine = 5-methyluridine(54) in tRNA + S-adenosyl-L-homocysteine + H(+). It carries out the reaction uridine(341) in tmRNA + S-adenosyl-L-methionine = 5-methyluridine(341) in tmRNA + S-adenosyl-L-homocysteine + H(+). In terms of biological role, dual-specificity methyltransferase that catalyzes the formation of 5-methyluridine at position 54 (m5U54) in all tRNAs, and that of position 341 (m5U341) in tmRNA (transfer-mRNA). In Pseudomonas entomophila (strain L48), this protein is tRNA/tmRNA (uracil-C(5))-methyltransferase.